Consider the following 317-residue polypeptide: Sulfate adenylyltransferase subunit 2 (317 aa).

Disordered regions lie at residues 1-21 (MPDSRPDTELSNPQSAKAPLD) and 298-317 (RAIDRDQSGSMEKKKREGYF).

Belongs to the PAPS reductase family. CysD subfamily. Heterodimer composed of CysD, the smaller subunit, and CysN.

It carries out the reaction sulfate + ATP + H(+) = adenosine 5'-phosphosulfate + diphosphate. The protein operates within sulfur metabolism; hydrogen sulfide biosynthesis; sulfite from sulfate: step 1/3. Its function is as follows. With CysN forms the ATP sulfurylase (ATPS) that catalyzes the adenylation of sulfate producing adenosine 5'-phosphosulfate (APS) and diphosphate, the first enzymatic step in sulfur assimilation pathway. APS synthesis involves the formation of a high-energy phosphoric-sulfuric acid anhydride bond driven by GTP hydrolysis by CysN coupled to ATP hydrolysis by CysD. This chain is Sulfate adenylyltransferase subunit 2, found in Rhizobium etli (strain CIAT 652).